A 434-amino-acid polypeptide reads, in one-letter code: Probable exopolygalacturonase A (434 aa).

The first 19 residues, 1–19 (MKLPILVTLFITLPALCVS), serve as a signal peptide directing secretion. Residues asparagine 46, asparagine 57, asparagine 106, asparagine 199, and asparagine 207 are each glycosylated (N-linked (GlcNAc...) asparagine). A PbH1 1 repeat occupies 232-253 (SSNIVIQDSRIVNTDDCVSFKP). Catalysis depends on aspartate 246, which acts as the Proton donor. An intrachain disulfide couples cysteine 248 to cysteine 265. Asparagine 254 carries N-linked (GlcNAc...) asparagine glycosylation. The stretch at 255–275 (STQIVIQNLDCTGSHGISVGS) is one PbH1 2 repeat. The active site involves histidine 269. Asparagine 293, asparagine 329, and asparagine 354 each carry an N-linked (GlcNAc...) asparagine glycan. A disulfide bridge connects residues cysteine 392 and cysteine 398. N-linked (GlcNAc...) asparagine glycosylation is present at asparagine 400.

The protein belongs to the glycosyl hydrolase 28 family.

It is found in the secreted. The enzyme catalyses [(1-&gt;4)-alpha-D-galacturonosyl](n) + H2O = alpha-D-galacturonate + [(1-&gt;4)-alpha-D-galacturonosyl](n-1). Functionally, specific in hydrolyzing the terminal glycosidic bond of polygalacturonic acid and oligogalacturonates. The protein is Probable exopolygalacturonase A (pgxA) of Aspergillus niger (strain ATCC MYA-4892 / CBS 513.88 / FGSC A1513).